A 752-amino-acid chain; its full sequence is Mitochondrial Rho GTPase 1 (752 aa).

Residues 1-671 (MRKDVRIVLA…RNALSYGTNR (671 aa)) are Cytoplasmic-facing. The Miro 1 domain occupies 2–170 (RKDVRIVLAG…FYFAQKAVLY (169 aa)). Residues 11–18 (GDPDVGKS), 57–61 (DTSSS), and 115–118 (NKID) contribute to the GTP site. 2 consecutive EF-hand domains span residues 186–221 (ACVD…CFDT) and 333–368 (NGYQ…APDN). Residues aspartate 199, aspartate 201, aspartate 203, glutamate 210, aspartate 346, aspartate 348, aspartate 350, and glutamate 357 each coordinate Ca(2+). Residues 426–460 (SSGSASTPAPIPLTPTGPPGSRPSRNRTPCPPSTI) form a disordered region. Residues 434-446 (APIPLTPTGPPGS) show a composition bias toward pro residues. The region spanning 481–651 (RSVFLGFVLG…YGLICTIAVD (171 aa)) is the Miro 2 domain. GTP contacts are provided by residues 490-497 (GAAGSGKT), 526-530 (EQAGA), and 595-598 (TKAD). Residues 672–692 (WQFWGYIGLVVIGGGGAVWIC) form a helical; Anchor for type IV membrane protein membrane-spanning segment. Residues 693-752 (AKVLKVPIGSTLGFGSSASTTSWWLSGAQARGAGGPNATKVSSWFDWIRWQSSSNVRSEL) are Mitochondrial intermembrane-facing.

Belongs to the mitochondrial Rho GTPase family.

It is found in the mitochondrion outer membrane. In terms of biological role, mitochondrial GTPase involved in mitochondrial trafficking. Probably involved in control of anterograde transport of mitochondria and their subcellular distribution. The chain is Mitochondrial Rho GTPase 1 (GEM1) from Mycosarcoma maydis (Corn smut fungus).